The chain runs to 584 residues: Cation channel sperm-associated protein 2 (584 aa).

The Cytoplasmic portion of the chain corresponds to 1-106; that stretch reads MAHERGHLQL…LWAGWVLDSS (106 aa). A helical membrane pass occupies residues 107–129; the sequence is IFSNFIISLIFLNTFVLMVEIEL. Residues 130–138 lie on the Extracellular side of the membrane; it reads MNSTNTSLW. The helical transmembrane segment at 139 to 164 threads the bilayer; that stretch reads PLKLALEVTDWFILLSFIVEILLMWL. At 165–173 the chain is on the cytoplasmic side; that stretch reads ASFFLFWKN. Residues 174–198 traverse the membrane as a helical segment; the sequence is AWSVFDFVVTMLSLLPEFVVLIGVS. Over 199 to 201 the chain is Extracellular; sequence ADS. Residues 202 to 220 traverse the membrane as a helical segment; that stretch reads VWLQLLRVSRVLRSLKLFA. Residues 221–237 are Cytoplasmic-facing; sequence RFPQIKVILLALVRALK. Residues 238–260 traverse the membrane as a helical segment; sequence SMTFLLMLLLIFFYVFAVAGVYF. Residues 261-279 lie on the Extracellular side of the membrane; it reads FKEYSRSTIENLEYNMFFS. Residues 280 to 292 constitute an intramembrane region (helical; Pore-forming); the sequence is DLLNSLVTVFILF. Topologically, residues 293–312 are extracellular; it reads TLDHWYAVLQDVWKVPEASR. The chain crosses the membrane as a helical span at residues 313-339; that stretch reads VFSSIYVILWLLLGSIIFRNIIVAMMV. At 340 to 584 the chain is on the cytoplasmic side; sequence TNFQNIRNEL…VQALMNFEDK (245 aa). The span at 376 to 386 shows a compositional bias: polar residues; it reads SESLRGTSQGK. Disordered regions lie at residues 376-460 and 480-510; these read SESL…KGYT and AGKA…HDEA. Composition is skewed to acidic residues over residues 390 to 418 and 426 to 443; these read DITE…EEKS and EKND…EEKS. Composition is skewed to basic and acidic residues over residues 444-460 and 483-496; these read DVEK…KGYT and AENE…KEKA.

It belongs to the cation channel sperm-associated (TC 1.A.1.19) family. In terms of assembly, component of the CatSper complex or CatSpermasome composed of the core pore-forming members CATSPER1, CATSPER2, CATSPER3 and CATSPER4 as well as auxiliary members CATSPERB, CATSPERG, CATSPERD, CATSPERE, CATSPERZ, C2CD6/CATSPERT, SLCO6C1, TMEM249, TMEM262 and EFCAB9. HSPA1 may be an additional auxiliary complex member. The core complex members CATSPER1, CATSPER2, CATSPER3 and CATSPER4 form a heterotetrameric channel. The auxiliary CATSPERB, CATSPERG, CATSPERD and CATSPERE subunits form a pavilion-like structure over the pore which stabilizes the complex through interactions with CATSPER4, CATSPER3, CATSPER1 and CATSPER2 respectively. SLCO6C1 interacts with CATSPERE and TMEM262/CATSPERH interacts with CATSPERB, further stabilizing the complex. C2CD6/CATSPERT interacts at least with CATSPERD and is required for targeting the CatSper complex in the flagellar membrane. Interacts with Ca(v)3.3/CACNA1I, leading to suppression of T-type calcium channel activity.

The protein localises to the cell projection. It localises to the cilium. The protein resides in the flagellum membrane. The catalysed reaction is Ca(2+)(in) = Ca(2+)(out). Activated by intracellular alkalinization. In terms of biological role, pore-forming subunit of the CatSper complex, a sperm-specific voltage-gated calcium channel that plays a central role in sperm cell hyperactivation. Controls calcium entry to mediate the hyperactivated motility, a step needed for sperm motility which is essential late in the preparation of sperm for fertilization. The protein is Cation channel sperm-associated protein 2 (Catsper2) of Rattus norvegicus (Rat).